A 1138-amino-acid polypeptide reads, in one-letter code: Nuclear pore complex-interacting protein family member B13 (1138 aa).

A helical transmembrane segment spans residues valine 73–serine 93. Disordered stretches follow at residues arginine 242 to threonine 578 and glutamate 747 to serine 1138. Residues glutamine 252–leucine 263 are compositionally biased toward polar residues. Positions proline 349–proline 359 are enriched in pro residues. Composition is skewed to basic and acidic residues over residues aspartate 406–arginine 416, aspartate 448–arginine 458, aspartate 490–arginine 500, aspartate 532–arginine 542, aspartate 782–arginine 792, aspartate 824–arginine 834, aspartate 866–arginine 876, aspartate 908–arginine 918, aspartate 950–arginine 960, and aspartate 992–arginine 1002.

This sequence belongs to the NPIP family.

The protein localises to the membrane. The protein is Nuclear pore complex-interacting protein family member B13 of Homo sapiens (Human).